The chain runs to 181 residues: Oleosin (181 aa).

The tract at residues 1-28 (TTTTYDRHFTTTQPHYRQDDRSRYDQQT) is disordered. The tract at residues 1 to 38 (TTTTYDRHFTTTQPHYRQDDRSRYDQQTHSQSTSRTLA) is polar. Over residues 16–26 (YRQDDRSRYDQ) the composition is skewed to basic and acidic residues. Transmembrane regions (helical) follow at residues 38–58 (AIIA…LTFI), 69–89 (PLFV…GLAV), and 90–110 (TGFL…SYLF). The tract at residues 39 to 110 (IIALLPVGGI…TGLSSLSYLF (72 aa)) is hydrophobic. Residues 155–181 (EMGDQGQVGVHAQVGGGKEGRKSGDRT) are disordered. The span at 158–167 (DQGQVGVHAQ) shows a compositional bias: low complexity. Residues 172 to 181 (KEGRKSGDRT) are compositionally biased toward basic and acidic residues.

Belongs to the oleosin family.

Its subcellular location is the lipid droplet. The protein localises to the membrane. May have a structural role to stabilize the lipid body during desiccation of the seed by preventing coalescence of the oil. Probably interacts with both lipid and phospholipid moieties of lipid bodies. May also provide recognition signals for specific lipase anchorage in lipolysis during seedling growth. This Helianthus annuus (Common sunflower) protein is Oleosin.